Here is a 238-residue protein sequence, read N- to C-terminus: MNEPKYKRVMLKLSGEALSGEKGFGFDFDFTKEISEQIKKLVDMGIEVGAVVGGGNIWRGRSGSEMDRTTADYMGMLATCINALALQDSLEQLGVNTRVQTAIEMKEIAEPFIRRRAMRHLEKERVVIFASGTGNPYFSTDTAAALRAAEIEADVILLAKKVDGVYDKDPHKYDDAKKYNKLSYIEVLDQGLQVMDSTATSLCMDNDIPILVFGLDEPCNIIKAVTGEEIGTLVSNSK.

Residue 12–15 participates in ATP binding; the sequence is KLSG. An involved in allosteric activation by GTP region spans residues 20–25; sequence GEKGFG. G54 contacts UMP. 2 residues coordinate ATP: G55 and R59. Residues D72 and 133–140 each bind UMP; that span reads TGNPYFST. ATP is bound by residues Y166 and D169.

The protein belongs to the UMP kinase family. In terms of assembly, homohexamer.

It localises to the cytoplasm. The catalysed reaction is UMP + ATP = UDP + ADP. It functions in the pathway pyrimidine metabolism; CTP biosynthesis via de novo pathway; UDP from UMP (UMPK route): step 1/1. With respect to regulation, allosterically activated by GTP. Inhibited by UTP. Its function is as follows. Catalyzes the reversible phosphorylation of UMP to UDP. This chain is Uridylate kinase, found in Clostridium botulinum (strain Langeland / NCTC 10281 / Type F).